We begin with the raw amino-acid sequence, 284 residues long: N-acylphosphatidylethanolamine synthase (284 aa).

Residues Thr21–Cys37 form a helical membrane-spanning segment. Positions His67–Asp72 match the HXXXXD motif motif. Residues Gly122–Trp163 are hydrophilic.

This sequence belongs to the taffazin family. As to expression, essentially present in young tissues. Expressed in roots, cotyledons, leaves, and shoot and root apical meristems.

The protein localises to the cell membrane. In terms of biological role, acyltransferase that catalyzes the N-acylation of phosphatidylethanolamine to form N-acylphosphatidylethanolamine (N-acyl-PE) (e.g. NAPEs containing C16:0, C16:1, C18:0, and C18:1). Also mediates the formation of acylphosphatidylglycerol (acyl-PG) from lysoglycerophospholipid by O-acylation. Uses acyl-CoA as acyl donors. Acylates 1-acyllysophosphatidylethanolamine (1-acyllyso-PE) and 1-acyllysophosphatidylglycerol (1-acyllyso-PG) at the sn-2-position. This Arabidopsis thaliana (Mouse-ear cress) protein is N-acylphosphatidylethanolamine synthase.